The following is a 1270-amino-acid chain: DNA-directed RNA polymerase subunit beta (1270 aa).

It belongs to the RNA polymerase beta chain family. In terms of assembly, the RNAP catalytic core consists of 2 alpha, 1 beta, 1 beta' and 1 omega subunit. When a sigma factor is associated with the core the holoenzyme is formed, which can initiate transcription.

The catalysed reaction is RNA(n) + a ribonucleoside 5'-triphosphate = RNA(n+1) + diphosphate. DNA-dependent RNA polymerase catalyzes the transcription of DNA into RNA using the four ribonucleoside triphosphates as substrates. This Flavobacterium johnsoniae (strain ATCC 17061 / DSM 2064 / JCM 8514 / BCRC 14874 / CCUG 350202 / NBRC 14942 / NCIMB 11054 / UW101) (Cytophaga johnsonae) protein is DNA-directed RNA polymerase subunit beta.